The primary structure comprises 309 residues: Taste receptor type 2 member 43 (309 aa).

Position 1 (Met-1) is a topological domain, extracellular. The helical transmembrane segment at 2-22 (ITFLPIIFSSLVVVTFVIGNF) threads the bilayer. The Cytoplasmic segment spans residues 23 to 46 (ANGFIALVNSIEWFKRQKISFADQ). A helical transmembrane segment spans residues 47–67 (ILTALAVSRVGLLWVLLLNWY). Topologically, residues 68–86 (STVLNPAFNSVEVRTTAYN) are extracellular. The chain crosses the membrane as a helical span at residues 87 to 107 (IWAVINHFSNWLATTLSIFYL). Topologically, residues 108–126 (LKIANFSNFIFLHLKRRVK) are cytoplasmic. Residues 127 to 147 (SVILVMLLGPLLFLACHLFVI) form a helical membrane-spanning segment. Residues 148–178 (NMNEIVRTKEFEGNMTWKIKLKSAMYFSNMT) are Extracellular-facing. N-linked (GlcNAc...) asparagine glycosylation is found at Asn-161 and Asn-176. Residues 179 to 199 (VTMVANLVPFTLTLLSFMLLI) traverse the membrane as a helical segment. Residues 200–229 (CSLCKHLKKMQLHGKGSQDPSTKVHIKALQ) are Cytoplasmic-facing. The helical transmembrane segment at 230-250 (TVISFLLLCAIYFLSIMISVW) threads the bilayer. The Extracellular portion of the chain corresponds to 251–259 (SFGSLENKP). The helical transmembrane segment at 260-280 (VFMFCKAIRFSYPSIHPFILI) threads the bilayer. The Cytoplasmic portion of the chain corresponds to 281 to 309 (WGNKKLKQTFLSVFWQMRYWVKGEKTSSP).

It belongs to the G-protein coupled receptor T2R family. As to expression, expressed in subsets of taste receptor cells of the tongue and exclusively in gustducin-positive cells. Expressed in airway epithelia.

It localises to the membrane. It is found in the cell projection. The protein localises to the cilium membrane. Gustducin-coupled receptor immplicated in the perception of bitter compounds in the oral cavity and the gastrointestinal tract. Signals through PLCB2 and the calcium-regulated cation channel TRPM5. Activated by the sulfonyl amide sweeteners saccharin and acesulfame K. In airway epithelial cells, binding of bitter compounds increases the intracellular calcium ion concentration and stimulates ciliary beat frequency. May act as chemosensory receptors in airway epithelial cells to detect and eliminate potential noxious agents from the airways. In Homo sapiens (Human), this protein is Taste receptor type 2 member 43 (TAS2R43).